The sequence spans 304 residues: UDP-3-O-acyl-N-acetylglucosamine deacetylase (304 aa).

Residues His-78, His-237, and Asp-241 each coordinate Zn(2+). His-264 acts as the Proton donor in catalysis.

It belongs to the LpxC family. Zn(2+) serves as cofactor.

It carries out the reaction a UDP-3-O-[(3R)-3-hydroxyacyl]-N-acetyl-alpha-D-glucosamine + H2O = a UDP-3-O-[(3R)-3-hydroxyacyl]-alpha-D-glucosamine + acetate. Its pathway is glycolipid biosynthesis; lipid IV(A) biosynthesis; lipid IV(A) from (3R)-3-hydroxytetradecanoyl-[acyl-carrier-protein] and UDP-N-acetyl-alpha-D-glucosamine: step 2/6. Catalyzes the hydrolysis of UDP-3-O-myristoyl-N-acetylglucosamine to form UDP-3-O-myristoylglucosamine and acetate, the committed step in lipid A biosynthesis. This is UDP-3-O-acyl-N-acetylglucosamine deacetylase from Legionella pneumophila (strain Paris).